Here is a 938-residue protein sequence, read N- to C-terminus: Nitrate reductase (938 aa).

The 64-residue stretch at 1 to 64 (MSVVQSSCAY…RLLDSLAQPN (64 aa)) folds into the 4Fe-4S Mo/W bis-MGD-type domain. [4Fe-4S] cluster-binding residues include Cys-8, Cys-11, Cys-15, and Cys-50.

The protein belongs to the prokaryotic molybdopterin-containing oxidoreductase family. NasA/NapA/NarB subfamily. It depends on [4Fe-4S] cluster as a cofactor. The cofactor is Mo-bis(molybdopterin guanine dinucleotide).

It localises to the cytoplasm. It catalyses the reaction nitrate + a quinol = a quinone + nitrite + H2O. It participates in nitrogen metabolism; nitrate reduction (assimilation). In terms of biological role, nitrate reductase is a key enzyme involved in the first step of nitrate assimilation in plants, fungi and bacteria. The polypeptide is Nitrate reductase (Shewanella frigidimarina (strain NCIMB 400)).